The chain runs to 458 residues: ATP-dependent protease ATPase subunit HslU (458 aa).

ATP is bound by residues Val-18, 60–65, Asp-270, Glu-335, and Arg-407; that span reads GVGKTE.

This sequence belongs to the ClpX chaperone family. HslU subfamily. A double ring-shaped homohexamer of HslV is capped on each side by a ring-shaped HslU homohexamer. The assembly of the HslU/HslV complex is dependent on binding of ATP.

Its subcellular location is the cytoplasm. In terms of biological role, ATPase subunit of a proteasome-like degradation complex; this subunit has chaperone activity. The binding of ATP and its subsequent hydrolysis by HslU are essential for unfolding of protein substrates subsequently hydrolyzed by HslV. HslU recognizes the N-terminal part of its protein substrates and unfolds these before they are guided to HslV for hydrolysis. The protein is ATP-dependent protease ATPase subunit HslU of Desulfitobacterium hafniense (strain DSM 10664 / DCB-2).